We begin with the raw amino-acid sequence, 139 residues long: Large-conductance mechanosensitive channel (139 aa).

A run of 2 helical transmembrane segments spans residues 9 to 29 (AFAVKGNVVDMAVGIIIGAAF) and 79 to 99 (IQTVIDFVIVAFAIFMGVKAI).

It belongs to the MscL family. In terms of assembly, homopentamer.

Its subcellular location is the cell inner membrane. Functionally, channel that opens in response to stretch forces in the membrane lipid bilayer. May participate in the regulation of osmotic pressure changes within the cell. This Pseudomonas putida (strain GB-1) protein is Large-conductance mechanosensitive channel.